Consider the following 205-residue polypeptide: Probable 3'-5' exonuclease KapD (205 aa).

Residues 6–173 form the Exonuclease domain; it reads LLIIDFEFTM…DDALTAYKLF (168 aa). Residues aspartate 10, glutamate 12, and aspartate 104 each coordinate Mg(2+). The active-site Proton acceptor is glutamate 12. Residue glutamate 12 coordinates AMP. The Proton acceptor role is filled by histidine 160. Histidine 160 lines the AMP pocket. Aspartate 165 serves as a coordination point for Mg(2+).

Mg(2+) serves as cofactor.

Its function is as follows. Specifically inhibits the KinA pathway to sporulation. The polypeptide is Probable 3'-5' exonuclease KapD (kapD) (Bacillus subtilis (strain 168)).